The primary structure comprises 109 residues: MAGALVRKAADYVRSKDFRDYLMSTHFWGPVANWGLPIAAINDMKKSPEIISGRMTFALCCYSLTFMRFAYKVQPRNWLLFACHVTNEVAQLIQGGRLINYEMSKRPSA.

N-acetylalanine is present on Ala-2. Residues Ala-2–Asp-20 lie on the Mitochondrial matrix side of the membrane. The helical transmembrane segment at Tyr-21–Ile-41 threads the bilayer. Topologically, residues Asn-42–Ser-52 are mitochondrial intermembrane. A helical transmembrane segment spans residues Gly-53–Tyr-71. At Lys-72 the chain carries N6-acetyllysine. Residues Lys-72–Ala-109 are Mitochondrial matrix-facing.

It belongs to the mitochondrial pyruvate carrier (MPC) (TC 2.A.105) family. In terms of assembly, homodimer. Forms heterodimer with MPC2. The heterodimer is the more stable and dominant form.

The protein resides in the mitochondrion inner membrane. It carries out the reaction pyruvate(out) + H(+)(out) = pyruvate(in) + H(+)(in). Functionally, mediates the uptake of pyruvate into mitochondria. The polypeptide is Mitochondrial pyruvate carrier 1 (Mpc1) (Mus musculus (Mouse)).